The sequence spans 703 residues: UvrABC system protein B (703 aa).

Residues 33 to 190 (TRIENGENDV…RRFVAMQYKR (158 aa)) form the Helicase ATP-binding domain. 46–53 (GATGTGKT) serves as a coordination point for ATP. Residues 99 to 122 (YYDYYQPEAYIPQTDTYIEKDSNI) carry the Beta-hairpin motif. The 154-residue stretch at 436-589 (QIDDLLAEIK…QIAYNQEHGI (154 aa)) folds into the Helicase C-terminal domain. The UVR domain occupies 659-694 (ADLIRQLSEQMHTAAEQLQFELAARLRDEIRDLKKE).

This sequence belongs to the UvrB family. As to quaternary structure, forms a heterotetramer with UvrA during the search for lesions. Interacts with UvrC in an incision complex.

It is found in the cytoplasm. The UvrABC repair system catalyzes the recognition and processing of DNA lesions. A damage recognition complex composed of 2 UvrA and 2 UvrB subunits scans DNA for abnormalities. Upon binding of the UvrA(2)B(2) complex to a putative damaged site, the DNA wraps around one UvrB monomer. DNA wrap is dependent on ATP binding by UvrB and probably causes local melting of the DNA helix, facilitating insertion of UvrB beta-hairpin between the DNA strands. Then UvrB probes one DNA strand for the presence of a lesion. If a lesion is found the UvrA subunits dissociate and the UvrB-DNA preincision complex is formed. This complex is subsequently bound by UvrC and the second UvrB is released. If no lesion is found, the DNA wraps around the other UvrB subunit that will check the other stand for damage. The chain is UvrABC system protein B from Bifidobacterium longum subsp. infantis (strain ATCC 15697 / DSM 20088 / JCM 1222 / NCTC 11817 / S12).